Here is a 251-residue protein sequence, read N- to C-terminus: Ubiquinone/menaquinone biosynthesis C-methyltransferase UbiE (251 aa).

Residues T74, D95, and 123 to 124 (DA) each bind S-adenosyl-L-methionine.

The protein belongs to the class I-like SAM-binding methyltransferase superfamily. MenG/UbiE family.

The catalysed reaction is a 2-demethylmenaquinol + S-adenosyl-L-methionine = a menaquinol + S-adenosyl-L-homocysteine + H(+). It carries out the reaction a 2-methoxy-6-(all-trans-polyprenyl)benzene-1,4-diol + S-adenosyl-L-methionine = a 5-methoxy-2-methyl-3-(all-trans-polyprenyl)benzene-1,4-diol + S-adenosyl-L-homocysteine + H(+). It participates in quinol/quinone metabolism; menaquinone biosynthesis; menaquinol from 1,4-dihydroxy-2-naphthoate: step 2/2. Its pathway is cofactor biosynthesis; ubiquinone biosynthesis. Functionally, methyltransferase required for the conversion of demethylmenaquinol (DMKH2) to menaquinol (MKH2) and the conversion of 2-polyprenyl-6-methoxy-1,4-benzoquinol (DDMQH2) to 2-polyprenyl-3-methyl-6-methoxy-1,4-benzoquinol (DMQH2). This Idiomarina loihiensis (strain ATCC BAA-735 / DSM 15497 / L2-TR) protein is Ubiquinone/menaquinone biosynthesis C-methyltransferase UbiE.